The primary structure comprises 367 residues: Mitogen-activated protein kinase 12 (367 aa).

Residues 27–311 (YRDLQPVGSG…AGEALAHPYF (285 aa)) form the Protein kinase domain. ATP contacts are provided by residues 33–41 (VGSGAYGAV) and Lys56. Asp153 functions as the Proton acceptor in the catalytic mechanism. A Phosphothreonine; by MAP2K3 and MAP2K6 modification is found at Thr183. Residues 183–185 (TGY) carry the TXY motif. Tyr185 is modified (phosphotyrosine).

This sequence belongs to the protein kinase superfamily. CMGC Ser/Thr protein kinase family. MAP kinase subfamily. Monomer. Interacts with the PDZ domain of the syntrophin SNTA1. Interacts with SH3BP5. Interacts with LIN7C, SCRIB and SYNJ2BP. Interacts with PTPN4; this interaction induces the activation of PTPN4 phosphatase activity. Mg(2+) serves as cofactor. Post-translationally, dually phosphorylated on Thr-183 and Tyr-185 by MAP2K3/MKK3 and MAP2K6/MKK6, which activates the enzyme. Ubiquitinated. Ubiquitination leads to degradation by the proteasome pathway. In terms of tissue distribution, highly expressed in skeletal muscle and heart.

It is found in the cytoplasm. Its subcellular location is the nucleus. It localises to the mitochondrion. It carries out the reaction L-seryl-[protein] + ATP = O-phospho-L-seryl-[protein] + ADP + H(+). The catalysed reaction is L-threonyl-[protein] + ATP = O-phospho-L-threonyl-[protein] + ADP + H(+). Its activity is regulated as follows. Activated by phosphorylation on threonine and tyrosine. MAP2K3/MKK3 and MAP2K6/MKK6 are both essential for the activation of MAPK12 induced by environmental stress, whereas MAP2K6/MKK6 is the major MAPK12 activator in response to TNF-alpha. Its function is as follows. Serine/threonine kinase which acts as an essential component of the MAP kinase signal transduction pathway. MAPK12 is one of the four p38 MAPKs which play an important role in the cascades of cellular responses evoked by extracellular stimuli such as pro-inflammatory cytokines or physical stress leading to direct activation of transcription factors such as ELK1 and ATF2. Accordingly, p38 MAPKs phosphorylate a broad range of proteins and it has been estimated that they may have approximately 200 to 300 substrates each. Some of the targets are downstream kinases such as MAPKAPK2, which are activated through phosphorylation and further phosphorylate additional targets. Plays a role in myoblast differentiation and also in the down-regulation of cyclin D1 in response to hypoxia in adrenal cells suggesting MAPK12 may inhibit cell proliferation while promoting differentiation. Phosphorylates DLG1. Following osmotic shock, MAPK12 in the cell nucleus increases its association with nuclear DLG1, thereby causing dissociation of DLG1-SFPQ complexes. This function is independent of its catalytic activity and could affect mRNA processing and/or gene transcription to aid cell adaptation to osmolarity changes in the environment. Regulates UV-induced checkpoint signaling and repair of UV-induced DNA damage and G2 arrest after gamma-radiation exposure. MAPK12 is involved in the regulation of SLC2A1 expression and basal glucose uptake in L6 myotubes; and negatively regulates SLC2A4 expression and contraction-mediated glucose uptake in adult skeletal muscle. C-Jun (JUN) phosphorylation is stimulated by MAPK14 and inhibited by MAPK12, leading to a distinct AP-1 regulation. MAPK12 is required for the normal kinetochore localization of PLK1, prevents chromosomal instability and supports mitotic cell viability. MAPK12-signaling is also positively regulating the expansion of transient amplifying myogenic precursor cells during muscle growth and regeneration. The chain is Mitogen-activated protein kinase 12 (MAPK12) from Homo sapiens (Human).